The sequence spans 110 residues: Integration host factor subunit beta (110 aa).

The protein belongs to the bacterial histone-like protein family. Heterodimer of an alpha and a beta chain.

Its function is as follows. This protein is one of the two subunits of integration host factor, a specific DNA-binding protein that functions in genetic recombination as well as in transcriptional and translational control. The protein is Integration host factor subunit beta of Parvibaculum lavamentivorans (strain DS-1 / DSM 13023 / NCIMB 13966).